Reading from the N-terminus, the 374-residue chain is Chaperone protein DnaJ (374 aa).

Residues 4-68 (DYYEILGVSR…EMKARFDRFG (65 aa)) enclose the J domain. A CR-type zinc finger spans residues 132–214 (GGDKELTIKH…CGGRGQKEAT (83 aa)). Positions 145, 148, 162, 165, 188, 191, 202, and 205 each coordinate Zn(2+). CXXCXGXG motif repeat units lie at residues 145–152 (CGTCNGSG), 162–169 (CSTCGGTG), 188–195 (CPSCNGSG), and 202–209 (CVDCGGRG).

The protein belongs to the DnaJ family. Homodimer. The cofactor is Zn(2+).

It is found in the cytoplasm. Functionally, participates actively in the response to hyperosmotic and heat shock by preventing the aggregation of stress-denatured proteins and by disaggregating proteins, also in an autonomous, DnaK-independent fashion. Unfolded proteins bind initially to DnaJ; upon interaction with the DnaJ-bound protein, DnaK hydrolyzes its bound ATP, resulting in the formation of a stable complex. GrpE releases ADP from DnaK; ATP binding to DnaK triggers the release of the substrate protein, thus completing the reaction cycle. Several rounds of ATP-dependent interactions between DnaJ, DnaK and GrpE are required for fully efficient folding. Also involved, together with DnaK and GrpE, in the DNA replication of plasmids through activation of initiation proteins. This chain is Chaperone protein DnaJ, found in Trichodesmium erythraeum (strain IMS101).